The following is a 258-amino-acid chain: Tryptophan synthase alpha chain (258 aa).

Catalysis depends on proton acceptor residues Glu-47 and Asp-58.

It belongs to the TrpA family. Tetramer of two alpha and two beta chains.

It carries out the reaction (1S,2R)-1-C-(indol-3-yl)glycerol 3-phosphate + L-serine = D-glyceraldehyde 3-phosphate + L-tryptophan + H2O. It functions in the pathway amino-acid biosynthesis; L-tryptophan biosynthesis; L-tryptophan from chorismate: step 5/5. The alpha subunit is responsible for the aldol cleavage of indoleglycerol phosphate to indole and glyceraldehyde 3-phosphate. In Bacillus cereus (strain AH820), this protein is Tryptophan synthase alpha chain.